The primary structure comprises 242 residues: Ubiquinone biosynthesis O-methyltransferase (242 aa).

The S-adenosyl-L-methionine site is built by R44, G64, D85, and M129.

Belongs to the methyltransferase superfamily. UbiG/COQ3 family.

The enzyme catalyses a 3-demethylubiquinol + S-adenosyl-L-methionine = a ubiquinol + S-adenosyl-L-homocysteine + H(+). It carries out the reaction a 3-(all-trans-polyprenyl)benzene-1,2-diol + S-adenosyl-L-methionine = a 2-methoxy-6-(all-trans-polyprenyl)phenol + S-adenosyl-L-homocysteine + H(+). It participates in cofactor biosynthesis; ubiquinone biosynthesis. O-methyltransferase that catalyzes the 2 O-methylation steps in the ubiquinone biosynthetic pathway. This chain is Ubiquinone biosynthesis O-methyltransferase, found in Salmonella agona (strain SL483).